The chain runs to 133 residues: Small ribosomal subunit protein uS11 (133 aa).

The protein belongs to the universal ribosomal protein uS11 family. Part of the 30S ribosomal subunit. Interacts with proteins S7 and S18. Binds to IF-3.

In terms of biological role, located on the platform of the 30S subunit, it bridges several disparate RNA helices of the 16S rRNA. Forms part of the Shine-Dalgarno cleft in the 70S ribosome. The sequence is that of Small ribosomal subunit protein uS11 from Christiangramia forsetii (strain DSM 17595 / CGMCC 1.15422 / KT0803) (Gramella forsetii).